The chain runs to 253 residues: Imidazole glycerol phosphate synthase subunit HisF (253 aa).

Active-site residues include Asp11 and Asp130.

It belongs to the HisA/HisF family. As to quaternary structure, heterodimer of HisH and HisF.

It localises to the cytoplasm. The enzyme catalyses 5-[(5-phospho-1-deoxy-D-ribulos-1-ylimino)methylamino]-1-(5-phospho-beta-D-ribosyl)imidazole-4-carboxamide + L-glutamine = D-erythro-1-(imidazol-4-yl)glycerol 3-phosphate + 5-amino-1-(5-phospho-beta-D-ribosyl)imidazole-4-carboxamide + L-glutamate + H(+). Its pathway is amino-acid biosynthesis; L-histidine biosynthesis; L-histidine from 5-phospho-alpha-D-ribose 1-diphosphate: step 5/9. Its function is as follows. IGPS catalyzes the conversion of PRFAR and glutamine to IGP, AICAR and glutamate. The HisF subunit catalyzes the cyclization activity that produces IGP and AICAR from PRFAR using the ammonia provided by the HisH subunit. The chain is Imidazole glycerol phosphate synthase subunit HisF from Cereibacter sphaeroides (strain ATCC 17029 / ATH 2.4.9) (Rhodobacter sphaeroides).